A 102-amino-acid polypeptide reads, in one-letter code: Large ribosomal subunit protein uL24 (102 aa).

It belongs to the universal ribosomal protein uL24 family. In terms of assembly, part of the 50S ribosomal subunit.

In terms of biological role, one of two assembly initiator proteins, it binds directly to the 5'-end of the 23S rRNA, where it nucleates assembly of the 50S subunit. One of the proteins that surrounds the polypeptide exit tunnel on the outside of the subunit. The sequence is that of Large ribosomal subunit protein uL24 from Rhizobium leguminosarum bv. trifolii (strain WSM2304).